The sequence spans 932 residues: Protein translocase subunit SecA (932 aa).

ATP contacts are provided by residues Gln87, 105–109 (GEGKT), and Asp515. Residues Cys916, Cys918, Cys927, and His928 each coordinate Zn(2+).

It belongs to the SecA family. As to quaternary structure, monomer and homodimer. Part of the essential Sec protein translocation apparatus which comprises SecA, SecYEG and auxiliary proteins SecDF-YajC and YidC. It depends on Zn(2+) as a cofactor.

The protein resides in the cell inner membrane. It is found in the cytoplasm. The enzyme catalyses ATP + H2O + cellular proteinSide 1 = ADP + phosphate + cellular proteinSide 2.. Functionally, part of the Sec protein translocase complex. Interacts with the SecYEG preprotein conducting channel. Has a central role in coupling the hydrolysis of ATP to the transfer of proteins into and across the cell membrane, serving both as a receptor for the preprotein-SecB complex and as an ATP-driven molecular motor driving the stepwise translocation of polypeptide chains across the membrane. This chain is Protein translocase subunit SecA, found in Burkholderia multivorans (strain ATCC 17616 / 249).